The sequence spans 241 residues: Carboxy-S-adenosyl-L-methionine synthase (241 aa).

S-adenosyl-L-methionine-binding positions include Y38, 63–65, 88–89, 116–117, N131, and R198; these read GCS, DN, and DI.

Belongs to the class I-like SAM-binding methyltransferase superfamily. Cx-SAM synthase family. In terms of assembly, homodimer.

It catalyses the reaction prephenate + S-adenosyl-L-methionine = carboxy-S-adenosyl-L-methionine + 3-phenylpyruvate + H2O. Catalyzes the conversion of S-adenosyl-L-methionine (SAM) to carboxy-S-adenosyl-L-methionine (Cx-SAM). This Actinobacillus pleuropneumoniae serotype 3 (strain JL03) protein is Carboxy-S-adenosyl-L-methionine synthase.